The following is a 229-amino-acid chain: Uracil-DNA glycosylase (229 aa).

The active-site Proton acceptor is the aspartate 70.

This sequence belongs to the uracil-DNA glycosylase (UDG) superfamily. UNG family.

The protein localises to the cytoplasm. The catalysed reaction is Hydrolyzes single-stranded DNA or mismatched double-stranded DNA and polynucleotides, releasing free uracil.. Functionally, excises uracil residues from the DNA which can arise as a result of misincorporation of dUMP residues by DNA polymerase or due to deamination of cytosine. This chain is Uracil-DNA glycosylase, found in Chlamydia felis (strain Fe/C-56) (Chlamydophila felis).